A 249-amino-acid chain; its full sequence is tRNA pseudouridine synthase A (249 aa).

Aspartate 53 serves as the catalytic Nucleophile. A substrate-binding site is contributed by tyrosine 111.

The protein belongs to the tRNA pseudouridine synthase TruA family. Homodimer.

It catalyses the reaction uridine(38/39/40) in tRNA = pseudouridine(38/39/40) in tRNA. Functionally, formation of pseudouridine at positions 38, 39 and 40 in the anticodon stem and loop of transfer RNAs. In Streptococcus sanguinis (strain SK36), this protein is tRNA pseudouridine synthase A.